We begin with the raw amino-acid sequence, 349 residues long: Protein disulfide isomerase Creld2 (349 aa).

Positions 1 to 22 (MHLLLAAGFGLLLLLLPPPAAS) are cleaved as a signal peptide. A CXXC motif is present at residues 28–31 (CQRC). 4 disulfides stabilise this stretch: Cys-28–Cys-31, Cys-137–Cys-151, Cys-145–Cys-163, and Cys-165–Cys-174. Residues 133–175 (DCKECQGGSERPCSGNGYCSGDGSRQGDGSCQCHAGYKGPLCI) enclose the EGF-like 1 domain. A glycan (N-linked (GlcNAc...) asparagine) is linked at Asn-187. Residues 190–237 (HSICLACDESCKTCSGPSNKDCVQCEVGWARVEDACVDVDECAAETPP) form an FU 1 repeat. Asn-248 is a glycosylation site (N-linked (GlcNAc...) asparagine). The FU 2 repeat unit spans residues 250-297 (SYICEECDSTCVGCTGKGPANCKECIAGYTKQSGQCADIDECSLEEKA). The short motif at 260–263 (CVGC) is the CXXC element. 4 cysteine pairs are disulfide-bonded: Cys-260-Cys-263, Cys-291-Cys-305, Cys-298-Cys-314, and Cys-316-Cys-327. One can recognise an EGF-like 2; calcium-binding domain in the interval 287 to 328 (DIDECSLEEKACKRRNENCYNVPGSFVCVCPDGFEETEDACV).

This sequence belongs to the CRELD family. Interacts with Chrna4. Component of a complex containing at least Creld2, Manf, Matn3 and Pdia4. Broadly expressed in brain (at protein level).

It localises to the endoplasmic reticulum. The catalysed reaction is Catalyzes the rearrangement of -S-S- bonds in proteins.. Protein disulfide isomerase. Might play a role in the unfolded protein response. May regulate transport of alpha4-beta2 neuronal acetylcholine receptor. The sequence is that of Protein disulfide isomerase Creld2 (Creld2) from Rattus norvegicus (Rat).